The primary structure comprises 318 residues: Protein-L-histidine N-pros-methyltransferase (318 aa).

The signal sequence occupies residues 1–18; sequence MRLLAGWLCLSLASVWLA. A glycan (N-linked (GlcNAc...) asparagine) is linked at Asn-35. S-adenosyl-L-homocysteine is bound by residues Glu-174, Asn-210, and Tyr-295.

It belongs to the METTL9 family.

The protein localises to the endoplasmic reticulum. It is found in the mitochondrion. The catalysed reaction is L-histidyl-[protein] + S-adenosyl-L-methionine = N(pros)-methyl-L-histidyl-[protein] + S-adenosyl-L-homocysteine + H(+). Its function is as follows. Protein-histidine N-methyltransferase that specifically catalyzes 1-methylhistidine (pros-methylhistidine) methylation of target proteins. Specifically methylates the second His of proteins with a His-x-His (HxH) motif (where 'x' is preferably a small amino acid), while exploiting the first one as a recognition signature. Catalyzes methylation of target proteins such as S100A9, NDUFB3, SLC39A5, SLC39A7, ARMC6 and DNAJB12; 1-methylhistidine modification may affect the binding of zinc and other metals to its target proteins. Constitutes the main methyltransferase for the 1-methylhistidine modification in cell. The chain is Protein-L-histidine N-pros-methyltransferase from Bos taurus (Bovine).